Here is a 147-residue protein sequence, read N- to C-terminus: Insertion element IS402 uncharacterized 16.2 kDa protein (147 aa).

Positions 106-147 are disordered; it reads DSSSIRAVGAGQKLGQTPPIARDPVPSTTSSPTPTVRRSPRS. Over residues 129 to 147 the composition is skewed to low complexity; that stretch reads PVPSTTSSPTPTVRRSPRS.

The protein belongs to the transposase 6 family.

This is Insertion element IS402 uncharacterized 16.2 kDa protein from Burkholderia cepacia (Pseudomonas cepacia).